The sequence spans 158 residues: Ribonuclease H (158 aa).

Residues M1 to M142 form the RNase H type-1 domain. 4 residues coordinate Mg(2+): D10, E48, D70, and D134.

The protein belongs to the RNase H family. In terms of assembly, monomer. Requires Mg(2+) as cofactor.

It localises to the cytoplasm. The enzyme catalyses Endonucleolytic cleavage to 5'-phosphomonoester.. In terms of biological role, endonuclease that specifically degrades the RNA of RNA-DNA hybrids. The sequence is that of Ribonuclease H from Cronobacter sakazakii (strain ATCC BAA-894) (Enterobacter sakazakii).